The chain runs to 450 residues: Interferon-induced protein 75 (450 aa).

Residues 1–108 (MFTLTKALEK…IFRSFRNVGY (108 aa)) enclose the HSR domain. Disordered stretches follow at residues 131–156 (CSLQ…APRV) and 170–225 (LDEQ…VKDD). The segment covering 143–154 (QLSLPSHLSSAP) has biased composition (low complexity). 2 positions are modified to phosphoserine: Ser-175 and Ser-177. A compositionally biased stretch (basic and acidic residues) spans 197-212 (SRDHQRKDKEDSREMP). Position 226 is a phosphoserine (Ser-226). 2 disordered regions span residues 238–283 (VLCT…HGVQ) and 318–360 (AQTS…KNDA). The span at 245–267 (KKARRKKRLNWSNSKRGRQKKKP) shows a compositional bias: basic residues. Residues 251–266 (KRLNWSNSKRGRQKKK) carry the Nuclear localization signal motif. Polar residues predominate over residues 343-353 (TSTAGKTTQVP). The SAND domain occupies 358-439 (NDAVDFLSPT…RQLEQKGLLF (82 aa)).

Its subcellular location is the nucleus. The sequence is that of Interferon-induced protein 75 (Ifi75) from Mus caroli (Ryukyu mouse).